The chain runs to 79 residues: Calcium/calmodulin-dependent protein kinase II inhibitor 2 (79 aa).

The interval 1 to 21 (MSEILPYGEDKMGRFGADPEG) is disordered. Residues 43–69 (KRPPKLGQIGRAKRVVIEDDRIDDVLK) are inhibitory domain.

This sequence belongs to the CAMK2N family. In terms of assembly, interacts with CAMK2A and CAMK2B in the presence of Ca(2+)/calmodulin or after autophosphorylation.

It is found in the nucleus. The protein localises to the cytoplasm. It localises to the cytosol. The protein resides in the synapse. In terms of biological role, potent and specific cellular inhibitor of CaM-kinase II (CAMK2). Traps Ca(2+)/calmodulin on CAMK2. This chain is Calcium/calmodulin-dependent protein kinase II inhibitor 2 (Camk2n2), found in Mus musculus (Mouse).